Reading from the N-terminus, the 185-residue chain is Anaphase-promoting complex subunit 10 (185 aa).

Thr2 is subject to N-acetylthreonine. The DOC domain occupies 2–185; that stretch reads TTPNKTPPGA…IDFMMYRSIR (184 aa). Lys169 carries the N6-acetyllysine modification.

Belongs to the APC10 family. The mammalian APC/C is composed at least of 14 distinct subunits ANAPC1, ANAPC2, CDC27/APC3, ANAPC4, ANAPC5, CDC16/APC6, ANAPC7, CDC23/APC8, ANAPC10, ANAPC11, CDC26/APC12, ANAPC13, ANAPC15 and ANAPC16 that assemble into a complex of at least 19 chains with a combined molecular mass of around 1.2 MDa; APC/C interacts with FZR1 and FBXO5. The C-terminus of APC10 binds to CDC27/APC3. Interacts with PIWIL1; interaction only takes place when PIWIL1 binds piRNA. Interacts with FBXO43; the interaction is direct.

It functions in the pathway protein modification; protein ubiquitination. Its function is as follows. Component of the anaphase promoting complex/cyclosome (APC/C), a cell cycle-regulated E3 ubiquitin ligase that controls progression through mitosis and the G1 phase of the cell cycle. The APC/C complex acts by mediating ubiquitination and subsequent degradation of target proteins: it mainly mediates the formation of 'Lys-11'-linked polyubiquitin chains and, to a lower extent, the formation of 'Lys-48'- and 'Lys-63'-linked polyubiquitin chains. The APC/C complex catalyzes assembly of branched 'Lys-11'-/'Lys-48'-linked branched ubiquitin chains on target proteins. The chain is Anaphase-promoting complex subunit 10 (ANAPC10) from Bos taurus (Bovine).